A 540-amino-acid polypeptide reads, in one-letter code: Hexose transporter HXT14 (540 aa).

Residues 1-56 are Cytoplasmic-facing; that stretch reads MTAQIPYQHSSGYISHFHNNELDAGRGRDYNVTIKYLDDKEENIEGQAAKISHNAS. The chain crosses the membrane as a helical span at residues 57-76; that stretch reads LHIPVLLCLVISLGGFIFGW. Residues 77–119 lie on the Extracellular side of the membrane; the sequence is DIGTIGGMTNMVSFQEKFGTTNIIHDDETIFVSTKKLTDLQIG. The chain crosses the membrane as a helical span at residues 120–140; sequence LIISIFNISCGVGALTLSKIG. The Cytoplasmic portion of the chain corresponds to 141–146; sequence DWIGRK. A helical transmembrane segment spans residues 147–167; that stretch reads GGIWFALVVYCIGITIQILSY. At 168-177 the chain is on the extracellular side; sequence GRWYFLTLGR. Residues 178-198 traverse the membrane as a helical segment; the sequence is AVTGIGVGVTTVLVPMFLSEN. Residues 199 to 204 are Cytoplasmic-facing; that stretch reads SPLKIR. Residues 205 to 225 form a helical membrane-spanning segment; that stretch reads GSMVSTYQLIVTFGILMGNIL. The Extracellular portion of the chain corresponds to 226-243; sequence NFICERCYKDPTQNIAWQ. The helical transmembrane segment at 244–264 threads the bilayer; that stretch reads LPLFLGYIWAIIIGMSLVYVP. The Cytoplasmic segment spans residues 265-357; the sequence is ESPQYLAKIK…IMAFQQLSGI (93 aa). Residues 358–374 form a helical membrane-spanning segment; sequence NYFFYYGTSVFKGVGIK. Residues 375-380 lie on the Extracellular side of the membrane; the sequence is DPYITS. The helical transmembrane segment at 381-398 threads the bilayer; it reads IILSSVNFLSTILGIYYV. Residues 399–405 are Cytoplasmic-facing; the sequence is EKWGHKT. The helical transmembrane segment at 406–426 threads the bilayer; that stretch reads CLLYGSTNLLFYMMTYATVGT. Residues 427–440 are Extracellular-facing; that stretch reads FGRETDFSNIVLII. Residues 441-461 form a helical membrane-spanning segment; sequence VTCCFIFWFAITLGPVTFVLV. Residues 462–478 lie on the Cytoplasmic side of the membrane; sequence SELFPLRTRAISMAICT. The helical transmembrane segment at 479 to 499 threads the bilayer; that stretch reads FINWMFNFLISLLTPMIVSKI. Residue Asp500 is a topological domain, extracellular. Residues 501 to 521 traverse the membrane as a helical segment; the sequence is FKLGYIFAACLLALIIFSWIL. The Cytoplasmic segment spans residues 522-540; the sequence is VPETRKKNEQEINKIFEPE.

The protein belongs to the major facilitator superfamily. Sugar transporter (TC 2.A.1.1) family.

The protein localises to the membrane. In terms of biological role, probable glucose transporter. In Saccharomyces cerevisiae (strain ATCC 204508 / S288c) (Baker's yeast), this protein is Hexose transporter HXT14 (HXT14).